We begin with the raw amino-acid sequence, 256 residues long: uncharacterized protein (256 aa).

It belongs to the metallo-beta-lactamase superfamily.

This is an uncharacterized protein from Methanocaldococcus jannaschii (strain ATCC 43067 / DSM 2661 / JAL-1 / JCM 10045 / NBRC 100440) (Methanococcus jannaschii).